Consider the following 259-residue polypeptide: Sorbitol-6-phosphate 2-dehydrogenase (259 aa).

4 to 33 (VAVVIGGGQTLGAFLCHGLAAEGYRVAVVD) is a binding site for NAD(+). Substrate is bound at residue Ser-141. The active-site Proton acceptor is the Tyr-154.

This sequence belongs to the short-chain dehydrogenases/reductases (SDR) family. Homotetramer.

The catalysed reaction is D-sorbitol 6-phosphate + NAD(+) = beta-D-fructose 6-phosphate + NADH + H(+). It functions in the pathway carbohydrate metabolism; D-sorbitol degradation; D-fructose 6-phosphate from D-sorbitol 6-phosphate: step 1/1. This Escherichia coli (strain K12) protein is Sorbitol-6-phosphate 2-dehydrogenase (srlD).